Here is a 529-residue protein sequence, read N- to C-terminus: Lanosterol 14-alpha demethylase (529 aa).

Cysteine 468 contributes to the heme binding site.

It belongs to the cytochrome P450 family. Heme is required as a cofactor.

It localises to the membrane. The enzyme catalyses a 14alpha-methyl steroid + 3 reduced [NADPH--hemoprotein reductase] + 3 O2 = a Delta(14) steroid + formate + 3 oxidized [NADPH--hemoprotein reductase] + 4 H2O + 4 H(+). It carries out the reaction a 14alpha-methyl steroid + reduced [NADPH--hemoprotein reductase] + O2 = a 14alpha-hydroxymethyl steroid + oxidized [NADPH--hemoprotein reductase] + H2O + H(+). The catalysed reaction is a 14alpha-hydroxymethyl steroid + reduced [NADPH--hemoprotein reductase] + O2 = a 14alpha-formyl steroid + oxidized [NADPH--hemoprotein reductase] + 2 H2O + H(+). It catalyses the reaction a 14alpha-formyl steroid + reduced [NADPH--hemoprotein reductase] + O2 = a Delta(14) steroid + formate + oxidized [NADPH--hemoprotein reductase] + H2O + 2 H(+). The enzyme catalyses lanosterol + 3 reduced [NADPH--hemoprotein reductase] + 3 O2 = 4,4-dimethyl-5alpha-cholesta-8,14,24-trien-3beta-ol + formate + 3 oxidized [NADPH--hemoprotein reductase] + 4 H2O + 4 H(+). It carries out the reaction lanosterol + reduced [NADPH--hemoprotein reductase] + O2 = 32-hydroxylanosterol + oxidized [NADPH--hemoprotein reductase] + H2O + H(+). The catalysed reaction is 32-hydroxylanosterol + reduced [NADPH--hemoprotein reductase] + O2 = 32-oxolanosterol + oxidized [NADPH--hemoprotein reductase] + 2 H2O + H(+). It catalyses the reaction 32-oxolanosterol + reduced [NADPH--hemoprotein reductase] + O2 = 4,4-dimethyl-5alpha-cholesta-8,14,24-trien-3beta-ol + formate + oxidized [NADPH--hemoprotein reductase] + H2O + 2 H(+). The enzyme catalyses eburicol + 3 reduced [NADPH--hemoprotein reductase] + 3 O2 = 14-demethyleburicol + formate + 3 oxidized [NADPH--hemoprotein reductase] + 4 H2O + 4 H(+). It carries out the reaction eburicol + reduced [NADPH--hemoprotein reductase] + O2 = 32-hydroxyeburicol + oxidized [NADPH--hemoprotein reductase] + H2O + H(+). The catalysed reaction is 32-hydroxyeburicol + reduced [NADPH--hemoprotein reductase] + O2 = 32-oxoeburicol + oxidized [NADPH--hemoprotein reductase] + 2 H2O + H(+). It catalyses the reaction 32-oxoeburicol + reduced [NADPH--hemoprotein reductase] + O2 = 14-demethyleburicol + formate + oxidized [NADPH--hemoprotein reductase] + H2O + 2 H(+). It functions in the pathway steroid biosynthesis; zymosterol biosynthesis; zymosterol from lanosterol: step 1/6. In terms of biological role, sterol 14alpha-demethylase that plays a critical role in the third module of ergosterol biosynthesis pathway, being ergosterol the major sterol component in fungal membranes that participates in a variety of functions. The third module or late pathway involves the ergosterol synthesis itself through consecutive reactions that mainly occur in the endoplasmic reticulum (ER) membrane. In filamentous fungi, during the initial step of this module, lanosterol (lanosta-8,24-dien-3beta-ol) can be metabolized to eburicol. Sterol 14alpha-demethylase catalyzes the three-step oxidative removal of the 14alpha-methyl group (C-32) of both these sterols in the form of formate, and converts eburicol and lanosterol to 14-demethyleburicol (4,4,24-trimethylergosta-8,14,24(28)-trienol) and 4,4-dimethyl-5alpha-cholesta-8,14,24-trien-3beta-ol, respectively, which are further metabolized by other enzymes in the pathway to ergosterol. Can also use substrates not intrinsic to fungi, such as 24,25-dihydrolanosterol (DHL), producing 4,4-dimethyl-8,14-cholestadien-3-beta-ol, but at lower rates than the endogenous substrates. The polypeptide is Lanosterol 14-alpha demethylase (ERG11) (Eremothecium gossypii (strain ATCC 10895 / CBS 109.51 / FGSC 9923 / NRRL Y-1056) (Yeast)).